Reading from the N-terminus, the 133-residue chain is Nickel-responsive regulator (133 aa).

His76, His87, His89, and Cys95 together coordinate Ni(2+).

Belongs to the transcriptional regulatory CopG/NikR family. In terms of assembly, homotetramer. Ni(2+) serves as cofactor.

Transcriptional repressor of the nikABCDE operon. Is active in the presence of excessive concentrations of intracellular nickel. This is Nickel-responsive regulator from Escherichia coli O6:K15:H31 (strain 536 / UPEC).